The following is a 546-amino-acid chain: Zinc metalloproteinase nas-9 (546 aa).

Residues 1–14 (MIFLLFVVFPFVYA) form the signal peptide. The propeptide occupies 15-300 (QLLPELLAGF…GGGGGGRVPR (286 aa)). N-linked (GlcNAc...) asparagine glycosylation occurs at asparagine 248. The 200-residue stretch at 308 to 507 (SAVQKWDIWK…IRLLKKMYCR (200 aa)) folds into the Peptidase M12A domain. 5 disulfides stabilise this stretch: cysteine 347–cysteine 506, cysteine 372–cysteine 392, cysteine 510–cysteine 546, cysteine 517–cysteine 539, and cysteine 526–cysteine 543. Histidine 401 serves as a coordination point for Zn(2+). The active site involves glutamate 402. Zn(2+) contacts are provided by histidine 405 and histidine 411. One can recognise a ShKT domain in the interval 510 to 546 (CDDQNVHCGTWALHGYCKMKEQMKWMNENCKASCDKC).

Requires Zn(2+) as cofactor. Expressed in hypodermis, uterus and spermatheca.

It is found in the secreted. Metalloprotease. This Caenorhabditis elegans protein is Zinc metalloproteinase nas-9 (nas-9).